Here is a 423-residue protein sequence, read N- to C-terminus: Gamma-glutamyl phosphate reductase (423 aa).

A compositionally biased stretch (low complexity) spans 1–14 (MTLQAAPRSAAAQQ). The interval 1–25 (MTLQAAPRSAAAQQREPDLRQEVHD) is disordered. Over residues 15 to 25 (REPDLRQEVHD) the composition is skewed to basic and acidic residues.

The protein belongs to the gamma-glutamyl phosphate reductase family.

It localises to the cytoplasm. It catalyses the reaction L-glutamate 5-semialdehyde + phosphate + NADP(+) = L-glutamyl 5-phosphate + NADPH + H(+). The protein operates within amino-acid biosynthesis; L-proline biosynthesis; L-glutamate 5-semialdehyde from L-glutamate: step 2/2. Catalyzes the NADPH-dependent reduction of L-glutamate 5-phosphate into L-glutamate 5-semialdehyde and phosphate. The product spontaneously undergoes cyclization to form 1-pyrroline-5-carboxylate. This is Gamma-glutamyl phosphate reductase from Mycobacterium ulcerans (strain Agy99).